The sequence spans 152 residues: Snaclec coagulation factor IX/factor X-binding protein subunit A (152 aa).

A signal peptide spans 1–23 (MGRFIFLSFGLLVVFLSLSGTGA). Intrachain disulfides connect Cys-25/Cys-36, Cys-53/Cys-150, and Cys-125/Cys-142. Residues 32–151 (YEGHCYNIFH…CGERNPFVCE (120 aa)) form the C-type lectin domain. The Ca(2+) site is built by Ser-64, Glu-66, and Glu-70. Glu-151 lines the Ca(2+) pocket.

It belongs to the snaclec family. In terms of assembly, heterodimer of subunits A and B; disulfide-linked. In terms of tissue distribution, expressed by the venom gland.

It is found in the secreted. Anticoagulant protein which binds to the gamma-carboxyglutamic acid-domain regions of factors IX (F9) and factor X (F10) in the presence of calcium with a 1 to 1 stoichiometry. In Gloydius halys (Chinese water mocassin), this protein is Snaclec coagulation factor IX/factor X-binding protein subunit A.